A 218-amino-acid polypeptide reads, in one-letter code: 25.3 kDa vesicle transport protein SEC22-1 (218 aa).

At 1–192 (MVKMTLIARV…DKAKDLNRQA (192 aa)) the chain is on the cytoplasmic side. The Longin domain maps to 6 to 120 (LIARVTDGLP…YAFIKFDTFI (115 aa)). The 61-residue stretch at 135 to 195 (NIAKLNDELY…KDLNRQALIR (61 aa)) folds into the v-SNARE coiled-coil homology domain. The chain crosses the membrane as a helical; Anchor for type IV membrane protein span at residues 193–213 (LIRKWAPVAIVFGVVFLLFWV). At 214 to 218 (KNKLW) the chain is on the vesicular side.

This sequence belongs to the synaptobrevin family. Interacts with SEC24A. Mainly expressed in flowers and siliques, to a lower extent in seedlings, and barely in roots and leaves.

The protein localises to the golgi apparatus membrane. The protein resides in the endoplasmic reticulum membrane. Its function is as follows. V-SNARE involved in vesicle trafficking from the ER to the Golgi complex and required for early secretion. Involved in endoplasmic reticulum (ER) biogenesis and functions as well as for Golgi-stack integrity. Essential for gametophytes development. Involved in cesium Cs(+) accumulation, a non-essential cation. This chain is 25.3 kDa vesicle transport protein SEC22-1, found in Arabidopsis thaliana (Mouse-ear cress).